An 82-amino-acid polypeptide reads, in one-letter code: Consomatin Mao1 (82 aa).

The N-terminal stretch at 1–22 (MQTASWVMVMMMVWITAPLSEG) is a signal peptide. Residues 23-57 (GKLNDVIRGLVPDDVTPQLILRSLFFHRPSDSVVR) constitute a propeptide that is removed on maturation. Cys-65 and Cys-70 are oxidised to a cystine. Trp-67 is subject to D-tryptophan. 4-hydroxyproline is present on residues Pro-71, Pro-72, and Pro-74. Positions 75–82 (WRRPNGKG) are excised as a propeptide.

Belongs to the conotoxin C superfamily. Consomatin family. In terms of tissue distribution, expressed by the venom duct.

It is found in the secreted. Functionally, moderately activates human somatostatin receptors (SSTR) with a preferential activation of SSTR1 and SSTR4. In vivo, does not cause behavioral changes in mice within a few minutes of intracranial injection, but causes a progressive loss of movement thereafter. Four to five hours after injection, mice recover, even with the highest dose tested. Shows antinociception and antihyperalgesia activities in two mouse models of acute pain, most probably by acting outside the central nervous system. This is Consomatin Mao1 from Conus maioensis (Sea snail).